Reading from the N-terminus, the 299-residue chain is tRNA-cytidine(32) 2-sulfurtransferase (299 aa).

The PP-loop motif motif lies at 49-54; sequence SGGKDS. 3 residues coordinate [4Fe-4S] cluster: C124, C127, and C215.

This sequence belongs to the TtcA family. As to quaternary structure, homodimer. Requires Mg(2+) as cofactor. The cofactor is [4Fe-4S] cluster.

It localises to the cytoplasm. It catalyses the reaction cytidine(32) in tRNA + S-sulfanyl-L-cysteinyl-[cysteine desulfurase] + AH2 + ATP = 2-thiocytidine(32) in tRNA + L-cysteinyl-[cysteine desulfurase] + A + AMP + diphosphate + H(+). The protein operates within tRNA modification. Its function is as follows. Catalyzes the ATP-dependent 2-thiolation of cytidine in position 32 of tRNA, to form 2-thiocytidine (s(2)C32). The sulfur atoms are provided by the cysteine/cysteine desulfurase (IscS) system. In Deinococcus radiodurans (strain ATCC 13939 / DSM 20539 / JCM 16871 / CCUG 27074 / LMG 4051 / NBRC 15346 / NCIMB 9279 / VKM B-1422 / R1), this protein is tRNA-cytidine(32) 2-sulfurtransferase.